Consider the following 134-residue polypeptide: Small ribosomal subunit protein uS8c (134 aa).

Belongs to the universal ribosomal protein uS8 family. In terms of assembly, part of the 30S ribosomal subunit.

The protein localises to the plastid. Its subcellular location is the chloroplast. One of the primary rRNA binding proteins, it binds directly to 16S rRNA central domain where it helps coordinate assembly of the platform of the 30S subunit. The polypeptide is Small ribosomal subunit protein uS8c (rps8) (Gossypium barbadense (Sea Island cotton)).